The primary structure comprises 493 residues: Aminotransferase swnA (493 aa).

It belongs to the class-I pyridoxal-phosphate-dependent aminotransferase family. Requires pyridoxal 5'-phosphate as cofactor.

Its pathway is mycotoxin biosynthesis. Aminotransferase; part of the gene cluster that mediates the biosynthesis of swainsonine (SW), a cytotoxic fungal alkaloid and a potential cancer therapy drug. Swainsonine production occurs via a multibranched pathway and is dispensable for fungal colonization of plants and infection of insect hosts. The first step of swainsonine biosynthesis is the production of the precursor pipecolic acid (PA) via conversion of L-lysine (Lys) to 1-piperideine-6-carboxylate (P6C) by the aminotransferase swnA, the latter being further reduced to PA by the reductase swnR. The PKS-NRPS hybrid synthetase swnK uptakes and condensates PA and malonyl-CoA with and without skipping of the ketoreductase (KR) domain in order to produce 3 intermediates, 1-oxoindolizidine, (1S)-1-hydroxyindolizin, and (1R)-1-hydroxyindolizine; with the transisomer (1S)-1-hydroxyindolizin being predominant. The terminal thioester reductase (TE) domain of swnK is involved in reduction of the thioester bond to release the intermediate aldehydes. The oxidoreductase swnN could contribute to the reduction of 1-oxoindolizidine to (1S)-1-hydroxyindolizin and (1R)-1-hydroxyindolizine, contributing to the major route of SW production. The dioxygenase swnH2 would be responsible for the oxidization of (1R)-1-hydroxyindolizine into (1R,2S)-1,2-dihydroxyindolizine and of (1S)-1-hydroxyindolizin to yield both (1R,2S)-1,2-dihydroxyindolizine and (1S,2S)-1,2-dihydroxyindolizine. The dioxygenase swnH1 then performs the conversion of the 1,2-dihydroxyindolizine epimers to SW. The protein is Aminotransferase swnA of Arthroderma benhamiae (strain ATCC MYA-4681 / CBS 112371) (Trichophyton mentagrophytes).